A 382-amino-acid polypeptide reads, in one-letter code: Adaptive-response sensory kinase SasA (382 aa).

The 223-residue stretch at 160–382 (MLAHDLRSPL…CFHFTLPVYR (223 aa)) folds into the Histidine kinase domain. Phosphohistidine; by autocatalysis is present on His163.

In terms of assembly, homooligomerizes. Interacts with KaiC. Participates in the KaiABC clock complex, whose core is composed of a KaiC homohexamer, 6 KaiB and up to 6 KaiA dimers. SasA and KaiB(fs) compete to bind to KaiC.

The enzyme catalyses ATP + protein L-histidine = ADP + protein N-phospho-L-histidine.. Functionally, member of the two-component regulatory system SasA/RpaA involved in genome-wide circadian gene expression. One of several clock output pathways. Participates in the Kai clock protein complex, the main circadian regulator in cyanobacteria, via its interaction with KaiC. KaiC enhances the autophosphorylation activity of SasA, which then transfers its phosphate group to RpaA to activate it. In addition to its output function, recruits fold-shifted KaiB (KaiB(fs)) to KaiC to cooperatively form the KaiB(6):KaiC(6) complex (independent of SasA kinase activity). Required for robustness of the circadian rhythm of gene expression and is involved in clock output, also required for adaptation to light/dark cycles. In Crocosphaera subtropica (strain ATCC 51142 / BH68) (Cyanothece sp. (strain ATCC 51142)), this protein is Adaptive-response sensory kinase SasA.